The sequence spans 1486 residues: Chromosome partition protein MukB (1486 aa).

34-41 (GGNGAGKS) lines the ATP pocket. Coiled coils occupy residues 326–418 (LEAD…QYNQ), 444–480 (LETF…QAYQ), and 509–603 (RHLA…RAPV). The interval 666–783 (PGGSEDQRLN…EVPLFGRAAR (118 aa)) is flexible hinge. Coiled coils occupy residues 835–923 (EAEI…AKLE), 977–1115 (EMLS…TAKA), and 1209–1266 (VEAI…QNVS).

The protein belongs to the SMC family. MukB subfamily. In terms of assembly, homodimerization via its hinge domain. Binds to DNA via its C-terminal region. Interacts, and probably forms a ternary complex, with MukE and MukF via its C-terminal region. The complex formation is stimulated by calcium or magnesium. Interacts with tubulin-related protein FtsZ.

It localises to the cytoplasm. It is found in the nucleoid. In terms of biological role, plays a central role in chromosome condensation, segregation and cell cycle progression. Functions as a homodimer, which is essential for chromosome partition. Involved in negative DNA supercoiling in vivo, and by this means organize and compact chromosomes. May achieve or facilitate chromosome segregation by condensation DNA from both sides of a centrally located replisome during cell division. The protein is Chromosome partition protein MukB of Escherichia coli O157:H7.